Consider the following 1203-residue polypeptide: DNA-directed RNA polymerase subunit beta' (1203 aa).

4 residues coordinate Zn(2+): C60, C62, C75, and C78. Mg(2+)-binding residues include D449, D451, and D453. 4 residues coordinate Zn(2+): C818, C892, C899, and C902.

It belongs to the RNA polymerase beta' chain family. In terms of assembly, the RNAP catalytic core consists of 2 alpha, 1 beta, 1 beta' and 1 omega subunit. When a sigma factor is associated with the core the holoenzyme is formed, which can initiate transcription. Mg(2+) is required as a cofactor. Requires Zn(2+) as cofactor.

The catalysed reaction is RNA(n) + a ribonucleoside 5'-triphosphate = RNA(n+1) + diphosphate. In terms of biological role, DNA-dependent RNA polymerase catalyzes the transcription of DNA into RNA using the four ribonucleoside triphosphates as substrates. This Bacillus cereus (strain ZK / E33L) protein is DNA-directed RNA polymerase subunit beta'.